A 648-amino-acid polypeptide reads, in one-letter code: RAF proto-oncogene serine/threonine-protein kinase (648 aa).

Ser-29 carries the post-translational modification Phosphoserine; by MAPK1. Ser-43 carries the phosphoserine; by PKA and MAPK1 modification. Residues 56–131 (NTIRVFLPNK…IGEELQVDFL (76 aa)) form the RBD domain. Residues 138–184 (THNFARKTFLKLAFCDICQKFLLNGFRCQTCGYKFHEHCSTKVPTMC) form a Phorbol-ester/DAG-type zinc finger. 8 residues coordinate Zn(2+): His-139, Cys-152, Cys-155, Cys-165, Cys-168, His-173, Cys-176, and Cys-184. Residues 220 to 334 (SVSRMPVSSQ…QEKNKIRPRG (115 aa)) are disordered. The span at 239–271 (TFNTSSPSSEGSLSQRQRSTSTPNVHMVSTTLP) shows a compositional bias: polar residues. At Ser-252 the chain carries Phosphoserine. The residue at position 259 (Ser-259) is a Phosphoserine; by PKA, PKC and PKB/AKT1. Thr-268 carries the phosphothreonine; by autocatalysis modification. At Thr-269 the chain carries Phosphothreonine; by PKA. The span at 275–285 (RMIEDAIRSHS) shows a compositional bias: basic and acidic residues. Residues 286–301 (ESASPSALSSSPNNLS) show a composition bias toward low complexity. The residue at position 289 (Ser-289) is a Phosphoserine; by MAPK1. Residue Ser-296 is modified to Phosphoserine. A Phosphoserine; by MAPK1 modification is found at Ser-301. The interval 331-349 (RPRGQRDSSYYWEIEASEV) is interaction with PEBP1/RKIP. Residue Ser-338 is modified to Phosphoserine; by PAK1, PAK2, PAK3 and PAK5. Ser-339 is subject to Phosphoserine; by PAK1, PAK2 and PAK3. A phosphotyrosine; by SRC mark is found at Tyr-340 and Tyr-341. Positions 349–609 (VMLSTRIGSG…PQILSSIELL (261 aa)) constitute a Protein kinase domain. Residues 355–363 (IGSGSFGTV) and Lys-375 contribute to the ATP site. The active-site Proton acceptor is the Asp-468. Residue Ser-471 is modified to Phosphoserine. A Phosphothreonine modification is found at Thr-491. Ser-494 bears the Phosphoserine mark. At Ser-499 the chain carries Phosphoserine; by PKC. Residue Arg-563 is modified to Symmetric dimethylarginine; by PRMT5. The residue at position 621 (Ser-621) is a Phosphoserine. Ser-642 carries the phosphoserine; by MAPK1 modification.

This sequence belongs to the protein kinase superfamily. TKL Ser/Thr protein kinase family. RAF subfamily. As to quaternary structure, monomer. Homodimer. Heterodimerizes with BRAF and this heterodimer possesses a highly increased kinase activity compared to the respective homodimers or monomers. Heterodimerization is mitogen-regulated and enhanced by 14-3-3 proteins. MAPK1/ERK2 activation can induce a negative feedback that promotes the dissociation of the heterodimer. Forms a multiprotein complex with Ras (M-Ras/MRAS), SHOC2 and protein phosphatase 1 (PPP1CA, PPP1CB and PPP1CC). Interacts with LZTR1. Interacts with Ras proteins; the interaction is antagonized by RIN1. Weakly interacts with RIT1. Interacts (via N-terminus) with RGS14 (via RBD domains); the interaction mediates the formation of a ternary complex with BRAF, a ternary complex inhibited by GNAI1. Probably forms a complex composed of chaperones HSP90 and HSP70, co-chaperones CDC37, PPP5C, TSC1 and client protein TSC2, CDK4, AKT, RAF1 and NR3C1; this complex does not contain co-chaperones STIP1/HOP and PTGES3/p23. Interacts with STK3/MST2; the interaction inhibits its pro-apoptotic activity. Interacts (when phosphorylated at Ser-259) with YWHAZ (unphosphorylated at 'Thr-232'). Interacts with MAP2K1/MEK1 and MAP2K2/MEK2. Interacts with MAP3K5/ASF1 (via N-terminus) and this interaction inhibits the proapoptotic function of MAP3K5/ASK1. Interacts with PAK1 (via kinase domain). The phosphorylated form interacts with PIN1. The Ser-338 and Ser-339 phosphorylated form (by PAK1) interacts with BCL2. Interacts with PEBP1/RKIP and this interaction is enhanced if RAF1 is phosphorylated on residues Ser-338, Ser-339, Tyr-340 and Tyr-341. Interacts with ADCY2, ADCY5, ADCY6, DGKH, RCAN1/DSCR1, PPP1R12A, PKB/AKT1, PPP2CA, PPP2R1B, SPRY2, SPRY4, CNKSR1/CNK1, KSR2 and PHB/prohibitin. Interacts with ROCK2. In its active form, interacts with PRMT5. Interacts with FAM83B; displaces 14-3-3 proteins from RAF1 and activates RAF1. Interacts with PDE8A; the interaction promotes RAF1 activity. Interacts with MFHAS1. Interacts with GLS. Interacts with NEK10 and MAP2K1; the interaction is direct with NEK10 and required for ERK1/2-signaling pathway activation in response to UV irradiation. It depends on Zn(2+) as a cofactor. Phosphorylation at Thr-269, Ser-338, Tyr-341, Thr-491 and Ser-494 results in its activation. Phosphorylation at Ser-29, Ser-43, Ser-289, Ser-296, Ser-301 and Ser-642 by MAPK1/ERK2 results in its inactivation. Phosphorylation at Ser-259 induces the interaction with YWHAZ and inactivates kinase activity. Dephosphorylation of Ser-259 by the SHOC2-MRAS-PP1c (SMP) complex consisting of SHOC2, GTP-bound M-Ras/MRAS and the catalytic subunit of protein phosphatase 1 (PPP1CA, PPP1CB or PPP1CC); this relieves inactivation and stimulates kinase activity. Phosphorylation at Ser-338 by PAK1 and PAK5 and Ser-339 by PAK1 is required for its mitochondrial localization. Phosphorylation at Ser-621 in response to growth factor treatment stabilizes the protein, possibly by preventing proteasomal degradation. Phosphorylation at Ser-289, Ser-296, Ser-301, Ser-338 and Ser-621 are somehow linked to the methylation potential of cells. Treatment of cells with HGF in the presence of the methylation inhibitor 5'-methylthioadenosine (MTA) results in increased phosphorylation at Ser-338 and Ser-621 and decreased phosphorylation at Ser-296, Ser-301 and Ser-338. Dephosphorylation at Ser-338 by PPP5C results in an activity decrease. Post-translationally, methylated at Arg-563 in response to EGF treatment. This modification leads to destabilization of the protein, possibly through proteasomal degradation. In terms of tissue distribution, in skeletal muscle, isoform 1 is more abundant than isoform 2.

The protein resides in the cytoplasm. Its subcellular location is the cell membrane. It localises to the mitochondrion. It is found in the nucleus. It carries out the reaction L-seryl-[protein] + ATP = O-phospho-L-seryl-[protein] + ADP + H(+). The catalysed reaction is L-threonyl-[protein] + ATP = O-phospho-L-threonyl-[protein] + ADP + H(+). With respect to regulation, regulation is a highly complex process involving membrane recruitment, protein-protein interactions, dimerization, and phosphorylation/dephosphorylation events. Ras-GTP recruits RAF1 to the membrane, thereby promoting its activation. The inactive conformation of RAF1 is maintained by autoinhibitory interactions occurring between the N-terminal regulatory and the C-terminal catalytic domains and by the binding of a 14-3-3 protein that contacts two phosphorylation sites, Ser-259 and Ser-621. Upon mitogenic stimulation, Ras and PPP2R1A cooperate to release autoinhibition and the subsequent phosphorylation of activating sites: Ser-338, Tyr-341, Thr-491, and Ser-494, yields a fully active kinase. Through a negative feedback mechanism involving MAPK1/ERK2, RAF1 is phosphorylated on Ser-29, Ser-43, Ser-289, Ser-296, Ser-301 and Ser-642 by MAPK1/ERK2, which yields an inactive, desensitized kinase. The signaling-competent conformation of RAF1 is finally re-established by the coordinated action of PIN1, a prolyl isomerase that converts pSer and pThr residues from the cis to the trans conformation, which is preferentially recognized and dephosphorylated by PPP2R1A. Activated by homodimerization and heterodimerization (with BRAF). Also regulated through association with other proteins such as KSR2, CNKSR1/CNK1, PEBP1/RKIP, PHB/prohibitin and SPRY4. PEBP1/RKIP acts by dissociating RAF1 from its substrates MAP2K1/MEK1 and MAP2K2/MEK2. PHB/prohibitin facilitates the displacement of 14-3-3 from RAF1 by activated Ras, thereby promoting cell membrane localization and phosphorylation of RAF1 at the activating Ser-338. SPRY4 inhibits Ras-independent, but not Ras-dependent, activation of RAF1. CNKSR1/CNK1 regulates Src-mediated RAF1 activation. Serine/threonine-protein kinase that acts as a regulatory link between the membrane-associated Ras GTPases and the MAPK/ERK cascade, and this critical regulatory link functions as a switch determining cell fate decisions including proliferation, differentiation, apoptosis, survival and oncogenic transformation. RAF1 activation initiates a mitogen-activated protein kinase (MAPK) cascade that comprises a sequential phosphorylation of the dual-specific MAPK kinases (MAP2K1/MEK1 and MAP2K2/MEK2) and the extracellular signal-regulated kinases (MAPK3/ERK1 and MAPK1/ERK2). The phosphorylated form of RAF1 (on residues Ser-338 and Ser-339, by PAK1) phosphorylates BAD/Bcl2-antagonist of cell death at 'Ser-75'. Phosphorylates adenylyl cyclases: ADCY2, ADCY5 and ADCY6, resulting in their activation. Phosphorylates PPP1R12A resulting in inhibition of the phosphatase activity. Phosphorylates TNNT2/cardiac muscle troponin T. Can promote NF-kB activation and inhibit signal transducers involved in motility (ROCK2), apoptosis (MAP3K5/ASK1 and STK3/MST2), proliferation and angiogenesis (RB1). Can protect cells from apoptosis also by translocating to the mitochondria where it binds BCL2 and displaces BAD/Bcl2-antagonist of cell death. Regulates Rho signaling and migration, and is required for normal wound healing. Plays a role in the oncogenic transformation of epithelial cells via repression of the TJ protein, occludin (OCLN) by inducing the up-regulation of a transcriptional repressor SNAI2/SLUG, which induces down-regulation of OCLN. Restricts caspase activation in response to selected stimuli, notably Fas stimulation, pathogen-mediated macrophage apoptosis, and erythroid differentiation. This is RAF proto-oncogene serine/threonine-protein kinase from Homo sapiens (Human).